The sequence spans 268 residues: Putative ABC transporter ATP-binding protein MK0182 (268 aa).

An ABC transporter domain is found at 1 to 229 (MTHEYPDGTC…VDLIRESGLK (229 aa)). ATP is bound at residue 29–36 (GPNGSGKT).

Belongs to the ABC transporter superfamily.

Its subcellular location is the cell membrane. Functionally, probably part of an ABC transporter complex. Responsible for energy coupling to the transport system. The chain is Putative ABC transporter ATP-binding protein MK0182 from Methanopyrus kandleri (strain AV19 / DSM 6324 / JCM 9639 / NBRC 100938).